A 379-amino-acid polypeptide reads, in one-letter code: Cytochrome b (379 aa).

A run of 4 helical transmembrane segments spans residues 34-54, 78-99, 114-134, and 179-199; these read FGSL…FLAM, WLIR…YLHI, WNTG…GYVL, and FFTF…VHLL. Residues His-84 and His-98 each coordinate heme b. Heme b-binding residues include His-183 and His-197. His-202 serves as a coordination point for a ubiquinone. 4 helical membrane passes run 227–247, 289–309, 321–341, and 348–368; these read YKDL…TLFY, LGGV…PTLH, LTQT…WIGG, and FITI…ILMP.

Belongs to the cytochrome b family. As to quaternary structure, the cytochrome bc1 complex contains 3 respiratory subunits (MT-CYB, CYC1 and UQCRFS1), 2 core proteins (UQCRC1 and UQCRC2) and probably 6 low-molecular weight proteins. Heme b serves as cofactor.

Its subcellular location is the mitochondrion inner membrane. Component of the ubiquinol-cytochrome c reductase complex (complex III or cytochrome b-c1 complex) that is part of the mitochondrial respiratory chain. The b-c1 complex mediates electron transfer from ubiquinol to cytochrome c. Contributes to the generation of a proton gradient across the mitochondrial membrane that is then used for ATP synthesis. This chain is Cytochrome b (MT-CYB), found in Glyptemys muhlenbergii (Bog turtle).